Here is a 353-residue protein sequence, read N- to C-terminus: 2,4-diaminopentanoate dehydrogenase (353 aa).

It belongs to the DapB family. In terms of assembly, homodimer.

The catalysed reaction is (2R,4S)-2,4-diaminopentanoate + NAD(+) + H2O = (2R)-2-amino-4-oxopentanoate + NH4(+) + NADH + H(+). The enzyme catalyses (2R,4S)-2,4-diaminopentanoate + NADP(+) + H2O = (2R)-2-amino-4-oxopentanoate + NH4(+) + NADPH + H(+). With respect to regulation, inhibited by p-chloromercuribenzoate, iodoacetate and N-ethylmaleimide. In terms of biological role, involved in the ornithine fermentation pathway. Catalyzes the oxidative deamination of (2R,4S)-2,4-diaminopentanoate (DAP) to yield 2-amino-4-ketopentanoate (AKP). The polypeptide is 2,4-diaminopentanoate dehydrogenase (Acetoanaerobium sticklandii (strain ATCC 12662 / DSM 519 / JCM 1433 / CCUG 9281 / NCIMB 10654 / HF) (Clostridium sticklandii)).